Reading from the N-terminus, the 190-residue chain is Potassium-transporting ATPase KdpC subunit (190 aa).

Residues 10 to 30 (TFLFLLLITGGVYPLLTTALG) form a helical membrane-spanning segment.

It belongs to the KdpC family. In terms of assembly, the system is composed of three essential subunits: KdpA, KdpB and KdpC.

It is found in the cell inner membrane. Functionally, part of the high-affinity ATP-driven potassium transport (or Kdp) system, which catalyzes the hydrolysis of ATP coupled with the electrogenic transport of potassium into the cytoplasm. This subunit acts as a catalytic chaperone that increases the ATP-binding affinity of the ATP-hydrolyzing subunit KdpB by the formation of a transient KdpB/KdpC/ATP ternary complex. The chain is Potassium-transporting ATPase KdpC subunit from Escherichia coli (strain SMS-3-5 / SECEC).